The following is a 479-amino-acid chain: MAISWAAATTSKLAYPPHVHFSPSPSSNYLFLKTHKPSATHLSSSFIHPTTILHLAAANTTTRRRSFTVRAARGKFERKKPHVNIGTIGHVDHGKTTLTAALTMALASLGNSAPKKYDEIDAAPEERARGITINTATVEYETENRHYAHVDCPGHADYVKNMITGAAQMDGAILVVSGADGPMPQTKEHILLAKQVGVPNIVVFLNKQDQVDDEELLQLVELEVRELLSKYEFPGDDVPIISGSALLSLEALMANPSIKRGENQWVDKIYELMEAVDDYIPIPQRQTELPFLLAIEDVFTITGRGTVATGRVERGTIRVGETVDIVGVKDTRNTTVTGVEMFQKILDEALAGDNVGLLLRGIQKTDIQRGMVLAKPGTITPHTKFSAIVYVLKKEEGGRHSPFFSGYRPQFYMRTTDVTGKVTEIMNDKDEESKMVMPGDRVKLVVELIVPVACEQGMRFAIREGGKTVGAGVIQSIIE.

Residues 1-70 (MAISWAAATT…TTRRRSFTVR (70 aa)) constitute a chloroplast transit peptide. The region spanning 80–284 (KPHVNIGTIG…AVDDYIPIPQ (205 aa)) is the tr-type G domain. Positions 89–96 (GHVDHGKT) are G1. Residue 89-96 (GHVDHGKT) coordinates GTP. The G2 stretch occupies residues 130–134 (GITIN). The segment at 151–154 (DCPG) is G3. GTP is bound by residues 151–155 (DCPGH) and 206–209 (NKQD). Residues 206 to 209 (NKQD) form a G4 region. Residues 244-246 (SAL) are G5.

The protein belongs to the TRAFAC class translation factor GTPase superfamily. Classic translation factor GTPase family. EF-Tu/EF-1A subfamily.

It localises to the plastid. Its subcellular location is the chloroplast. In terms of biological role, this protein promotes the GTP-dependent binding of aminoacyl-tRNA to the A-site of ribosomes during protein biosynthesis. The polypeptide is Elongation factor Tu, chloroplastic (TUFB1) (Glycine max (Soybean)).